The primary structure comprises 130 residues: S-protein homolog 30 (130 aa).

N-linked (GlcNAc...) asparagine glycans are attached at residues Asn-64 and Asn-77.

This sequence belongs to the plant self-incompatibility (S1) protein family.

It is found in the secreted. The sequence is that of S-protein homolog 30 from Arabidopsis thaliana (Mouse-ear cress).